We begin with the raw amino-acid sequence, 714 residues long: Fatty acid oxidation complex subunit alpha (714 aa).

The enoyl-CoA hydratase stretch occupies residues 1 to 190 (MEMASAFTLN…KLGLVDDVVP (190 aa)). The 3-hydroxyacyl-CoA dehydrogenase stretch occupies residues 306–714 (APLNSVGILG…FWKTTATDLQ (409 aa)).

In the N-terminal section; belongs to the enoyl-CoA hydratase/isomerase family. It in the central section; belongs to the 3-hydroxyacyl-CoA dehydrogenase family. In terms of assembly, heterotetramer of two alpha chains (FadJ) and two beta chains (FadI).

The protein localises to the cytoplasm. It carries out the reaction a (3S)-3-hydroxyacyl-CoA = a (2E)-enoyl-CoA + H2O. The enzyme catalyses a 4-saturated-(3S)-3-hydroxyacyl-CoA = a (3E)-enoyl-CoA + H2O. It catalyses the reaction a (3S)-3-hydroxyacyl-CoA + NAD(+) = a 3-oxoacyl-CoA + NADH + H(+). The catalysed reaction is (3S)-3-hydroxybutanoyl-CoA = (3R)-3-hydroxybutanoyl-CoA. It participates in lipid metabolism; fatty acid beta-oxidation. Functionally, catalyzes the formation of a hydroxyacyl-CoA by addition of water on enoyl-CoA. Also exhibits 3-hydroxyacyl-CoA epimerase and 3-hydroxyacyl-CoA dehydrogenase activities. This Escherichia coli O6:H1 (strain CFT073 / ATCC 700928 / UPEC) protein is Fatty acid oxidation complex subunit alpha.